The primary structure comprises 379 residues: Mannan endo-1,4-beta-mannosidase 7 (379 aa).

W64 and N179 together coordinate substrate. E180 (proton donor) is an active-site residue. Y260 serves as a coordination point for substrate. The active-site Nucleophile is the E300. A substrate-binding site is contributed by W342.

It belongs to the glycosyl hydrolase 5 (cellulase A) family. In terms of tissue distribution, expression not detected.

The catalysed reaction is Random hydrolysis of (1-&gt;4)-beta-D-mannosidic linkages in mannans, galactomannans and glucomannans.. This chain is Mannan endo-1,4-beta-mannosidase 7 (MAN7), found in Oryza sativa subsp. japonica (Rice).